Reading from the N-terminus, the 1678-residue chain is Hispidin synthase (1678 aa).

The segment at 33 to 453 (GEHRWSYREL…WLGRNTDFIQ (421 aa)) is adenylation (A) domain. Residues 586–661 (DELSNTVKHI…SLSNAVYAKL (76 aa)) form the Carrier 1 domain. Position 620 is an O-(pantetheine 4'-phosphoryl)serine (serine 620). The region spanning 683-1108 (GKEIVVVGQA…GTLGGIVLEA (426 aa)) is the Ketosynthase family 3 (KS3) domain. Active-site for beta-ketoacyl synthase activity residues include cysteine 852, histidine 988, and histidine 1029. The malonyl-CoA:ACP transacylase (MAT) domain stretch occupies residues 1201 to 1499 (YKRGALAFAF…VAWSLLLSNG (299 aa)). A disordered region spans residues 1562–1582 (EETLSSGSSTPTLENTDLDSG). The segment covering 1564–1576 (TLSSGSSTPTLEN) has biased composition (polar residues). The region spanning 1597–1672 (DDLRDSIVSS…EMVSNLVEQA (76 aa)) is the Carrier 2 domain. The residue at position 1632 (serine 1632) is an O-(pantetheine 4'-phosphoryl)serine.

This sequence in the N-terminal section; belongs to the NRP synthetase family.

The enzyme catalyses (E)-caffeate + 2 malonyl-CoA + ATP + H(+) = hispidin + AMP + 2 CO2 + diphosphate + 2 CoA. The protein operates within secondary metabolite biosynthesis. In terms of biological role, PKS-NRPS hybrid synthetase; part of the gene cluster that mediates the fungal bioluminescence cycle. Performs the biosynthesis of hispidin from caffeic acid by two cycles of addition of malonyl units followed by lactonization. The fungal bioluminescence cycle begins with the hispidin synthetase that catalyzes the formation of hispidin which is further hydroxylated by the hispidin-3-hydroxylase, yielding the fungal luciferin 3-hydroxyhispidin. The luciferase then produces an endoperoxide as a high-energy intermediate with decomposition that yields oxyluciferin (also known as caffeoylpyruvate) and light emission. Oxyluciferin can be recycled to caffeic acid by caffeoylpyruvate hydrolase. This Neonothopanus nambi (Agaricus nambi) protein is Hispidin synthase.